The sequence spans 132 residues: MAAAKIKKGDTVLVVRGKEKGKQGKVLKVYERVKRRDKQGNPVYVRHFVIVEGVRLIKKHVKPIEGVREGGIIETEGPIDISNVMLICPNCNKPTRVGFRIVEEGNVRRKYRYCKKCNENIDLVSEKVIKGG.

This sequence belongs to the universal ribosomal protein uL24 family. Part of the 50S ribosomal subunit.

One of two assembly initiator proteins, it binds directly to the 5'-end of the 23S rRNA, where it nucleates assembly of the 50S subunit. Its function is as follows. One of the proteins that surrounds the polypeptide exit tunnel on the outside of the subunit. The sequence is that of Large ribosomal subunit protein uL24 from Aquifex aeolicus (strain VF5).